We begin with the raw amino-acid sequence, 792 residues long: MEERELNQTQDIPEVLPILPLRETVVYPQMLIPLIVGREKSIRLVEDALSGNKLIGMCMQKTPVEDPTPDDIYRIGTVGIIVRSLRFPDNTLRLFVQGLQRIRVIEFLETEPYFKAKVEVIEEKVEKTVEIEGMMRNLLNLFQKMASLIPQFPEELLINAMNIQEPGRLADFIAFNTNLNINEKQEILETIDVKERLQKVTYYLTRELEILEIANKIQNEVKNEIEKSQKEYFLRQQMKAIQKELGEIDPREMEINELRQKLQEAKLPPEAMKEAERELERLSLMPPGSAEYTVTRTYLDWLISLPWAISTEDNLDIKRAEEILNEDHYDLEKVKERILEYLAVRKLKSDMKGPILCFVGPPGVGKTSLGKSIARALGRKFVRISLGGIRDEAEIRGHRRTYVGALPGRIIQGIRKAESNNPVFMLDEIDKLGSDFRGDPAAALLEVLDPEQNNAFVDNYLGVPFDLSKVMFIATANVLYTIPPALLDRMEVIELPGYTEYQKMGIAKGFLIPRQLKEHGLEKEQIEFSDDAIRKIIREYTREAGVRNLEREIASIIRKVAKGIAEGSITEKVIVKVEDVPKYLGPEKYTYGMKGEKDEVGVATGLAWTEAGGDILFVEALVVEGKGNLILTGKLGEVMQESAKTALSYVRSKLKDLNVSYELLEKADIHVHVPSGAIPKDGPSAGVTIATAIASALTRRPVKKDIGMTGEITLRGKVLPVGGIREKVLAAHRAGLTAVIMPKENKKDLEEIPEEVKKEITFYFVEHADEVLNLALLEVKESAEQRNPERIG.

Positions 16–208 (LPILPLRETV…KVTYYLTREL (193 aa)) constitute a Lon N-terminal domain. Residue 360–367 (GPPGVGKT) participates in ATP binding. In terms of domain architecture, Lon proteolytic spans 597–778 (KDEVGVATGL…DEVLNLALLE (182 aa)). Active-site residues include S684 and K727.

The protein belongs to the peptidase S16 family. As to quaternary structure, homohexamer. Organized in a ring with a central cavity.

It localises to the cytoplasm. The catalysed reaction is Hydrolysis of proteins in presence of ATP.. In terms of biological role, ATP-dependent serine protease that mediates the selective degradation of mutant and abnormal proteins as well as certain short-lived regulatory proteins. Required for cellular homeostasis and for survival from DNA damage and developmental changes induced by stress. Degrades polypeptides processively to yield small peptide fragments that are 5 to 10 amino acids long. Binds to DNA in a double-stranded, site-specific manner. This is Lon protease from Dictyoglomus thermophilum (strain ATCC 35947 / DSM 3960 / H-6-12).